A 1037-amino-acid polypeptide reads, in one-letter code: Probable inorganic carbon transporter subunit DabA 1 (1037 aa).

Zn(2+) is bound by residues Cys460, Asp462, His719, and Cys734.

This sequence belongs to the inorganic carbon transporter (TC 9.A.2) DabA family. In terms of assembly, forms a complex with DabB. It depends on Zn(2+) as a cofactor.

Its subcellular location is the cell inner membrane. In terms of biological role, part of an energy-coupled inorganic carbon pump. In Nitrobacter winogradskyi (strain ATCC 25391 / DSM 10237 / CIP 104748 / NCIMB 11846 / Nb-255), this protein is Probable inorganic carbon transporter subunit DabA 1.